The sequence spans 92 residues: UPF0250 protein PD_0532 (92 aa).

This sequence belongs to the UPF0250 family.

The polypeptide is UPF0250 protein PD_0532 (Xylella fastidiosa (strain Temecula1 / ATCC 700964)).